The primary structure comprises 453 residues: tRNA modification GTPase MnmE (453 aa).

(6S)-5-formyl-5,6,7,8-tetrahydrofolate is bound by residues Arg-22, Glu-79, and Lys-119. Residues 215 to 376 (GMKVVIAGRP…LRNHLKECMG (162 aa)) form the TrmE-type G domain. K(+) is bound at residue Asn-225. GTP contacts are provided by residues 225–230 (NAGKSS), 244–250 (TDIAGTT), 269–272 (DTAG), and 334–337 (NKAD). Ser-229 serves as a coordination point for Mg(2+). Thr-244, Ile-246, and Thr-249 together coordinate K(+). Position 250 (Thr-250) interacts with Mg(2+). Position 453 (Lys-453) interacts with (6S)-5-formyl-5,6,7,8-tetrahydrofolate.

The protein belongs to the TRAFAC class TrmE-Era-EngA-EngB-Septin-like GTPase superfamily. TrmE GTPase family. Homodimer. Heterotetramer of two MnmE and two MnmG subunits. The cofactor is K(+).

It is found in the cytoplasm. Functionally, exhibits a very high intrinsic GTPase hydrolysis rate. Involved in the addition of a carboxymethylaminomethyl (cmnm) group at the wobble position (U34) of certain tRNAs, forming tRNA-cmnm(5)s(2)U34. The chain is tRNA modification GTPase MnmE from Vibrio vulnificus (strain YJ016).